The sequence spans 514 residues: Probable outer membrane protein pmp12 (514 aa).

Residues Met1–Ala21 form the signal peptide.

This sequence belongs to the PMP outer membrane protein family.

The protein localises to the secreted. It localises to the cell wall. The protein resides in the cell outer membrane. The polypeptide is Probable outer membrane protein pmp12 (pmp12) (Chlamydia pneumoniae (Chlamydophila pneumoniae)).